The sequence spans 312 residues: Acetyl-coenzyme A carboxylase carboxyl transferase subunit alpha (312 aa).

A CoA carboxyltransferase C-terminal domain is found at 36–286 (RLDKEVKSIY…KEYFLDALRT (251 aa)).

This sequence belongs to the AccA family. In terms of assembly, acetyl-CoA carboxylase is a heterohexamer composed of biotin carboxyl carrier protein (AccB), biotin carboxylase (AccC) and two subunits each of ACCase subunit alpha (AccA) and ACCase subunit beta (AccD).

It localises to the cytoplasm. The catalysed reaction is N(6)-carboxybiotinyl-L-lysyl-[protein] + acetyl-CoA = N(6)-biotinyl-L-lysyl-[protein] + malonyl-CoA. Its pathway is lipid metabolism; malonyl-CoA biosynthesis; malonyl-CoA from acetyl-CoA: step 1/1. Component of the acetyl coenzyme A carboxylase (ACC) complex. First, biotin carboxylase catalyzes the carboxylation of biotin on its carrier protein (BCCP) and then the CO(2) group is transferred by the carboxyltransferase to acetyl-CoA to form malonyl-CoA. The polypeptide is Acetyl-coenzyme A carboxylase carboxyl transferase subunit alpha (Helicobacter pylori (strain J99 / ATCC 700824) (Campylobacter pylori J99)).